We begin with the raw amino-acid sequence, 129 residues long: Flagellar assembly factor FliW (129 aa).

It belongs to the FliW family. Interacts with translational regulator CsrA and flagellin(s).

Its subcellular location is the cytoplasm. Acts as an anti-CsrA protein, binds CsrA and prevents it from repressing translation of its target genes, one of which is flagellin. Binds to flagellin and participates in the assembly of the flagellum. The sequence is that of Flagellar assembly factor FliW from Campylobacter jejuni subsp. doylei (strain ATCC BAA-1458 / RM4099 / 269.97).